We begin with the raw amino-acid sequence, 203 residues long: Endo-type membrane-bound lytic murein transglycosylase A (203 aa).

Positions 1 to 15 are cleaved as a signal peptide; sequence MKLRWLLILVVFLAG. C16 carries the N-palmitoyl cysteine lipid modification. Residue C16 is the site of S-diacylglycerol cysteine attachment.

This sequence belongs to the transglycosylase Slt family.

It localises to the cell outer membrane. It carries out the reaction Endolytic cleavage of the (1-&gt;4)-beta-glycosidic linkage between N-acetylmuramic acid (MurNAc) and N-acetylglucosamine (GlcNAc) residues in peptidoglycan with concomitant formation of a 1,6-anhydrobond in the MurNAc residue.. In terms of biological role, murein-degrading enzyme. May play a role in recycling of muropeptides during cell elongation and/or cell division. Preferentially cleaves at a distance of more than two disaccharide units from the ends of the glycan chain. The chain is Endo-type membrane-bound lytic murein transglycosylase A from Klebsiella pneumoniae subsp. pneumoniae (strain ATCC 700721 / MGH 78578).